The chain runs to 192 residues: Thymidine kinase (192 aa).

ATP is bound by residues 9–16 and 87–90; these read SAMNAGKS and DECQ. Catalysis depends on Glu-88, which acts as the Proton acceptor. Zn(2+) contacts are provided by Cys-145, Cys-147, Cys-182, and His-185.

It belongs to the thymidine kinase family. In terms of assembly, homotetramer.

It is found in the cytoplasm. It catalyses the reaction thymidine + ATP = dTMP + ADP + H(+). The sequence is that of Thymidine kinase from Photobacterium profundum (strain SS9).